A 276-amino-acid polypeptide reads, in one-letter code: Large ribosomal subunit protein uL2 (276 aa).

The tract at residues 219–268 is disordered; it reads TVRGSVMNPNDHPHGGGEGRQPVGRKSPMTPWGKPALGLKTRNKKAKSSK.

Belongs to the universal ribosomal protein uL2 family. As to quaternary structure, part of the 50S ribosomal subunit. Forms a bridge to the 30S subunit in the 70S ribosome.

In terms of biological role, one of the primary rRNA binding proteins. Required for association of the 30S and 50S subunits to form the 70S ribosome, for tRNA binding and peptide bond formation. It has been suggested to have peptidyltransferase activity; this is somewhat controversial. Makes several contacts with the 16S rRNA in the 70S ribosome. The sequence is that of Large ribosomal subunit protein uL2 from Lactococcus lactis subsp. lactis (strain IL1403) (Streptococcus lactis).